We begin with the raw amino-acid sequence, 89 residues long: Small ribosomal subunit protein uS15 (89 aa).

The protein belongs to the universal ribosomal protein uS15 family. Part of the 30S ribosomal subunit. Forms a bridge to the 50S subunit in the 70S ribosome, contacting the 23S rRNA.

Its function is as follows. One of the primary rRNA binding proteins, it binds directly to 16S rRNA where it helps nucleate assembly of the platform of the 30S subunit by binding and bridging several RNA helices of the 16S rRNA. In terms of biological role, forms an intersubunit bridge (bridge B4) with the 23S rRNA of the 50S subunit in the ribosome. This is Small ribosomal subunit protein uS15 from Nitrosococcus oceani (strain ATCC 19707 / BCRC 17464 / JCM 30415 / NCIMB 11848 / C-107).